The following is a 739-amino-acid chain: Exocyst complex component 3-like protein (739 aa).

The segment at Met1–Thr370 is mediates interaction with EXOC2, EXOC4 and EXOC5.

This sequence belongs to the SEC6 family. Interacts with EXOC2, EXOC4 and EXOC5; may be part of the exocyst.

The protein localises to the cytoplasmic vesicle. The protein resides in the secretory vesicle. As part of the exocyst, may play a role in regulated exocytosis of insulin granules. This Bos taurus (Bovine) protein is Exocyst complex component 3-like protein (EXOC3L1).